The sequence spans 332 residues: MASATAPAAAAPTLAPPLQQLRHLAEELRLLLPRVRVGEAQETTEEFNREMFWRRLNEAAVTVSREATTLTTVFSQLPLPSPQETQKFCEQVHAAIKAFIAVYYLLPKDQGITLRKLVRGATLDIVDGMAQLMEVLSITPTQSPENNDLISYNSVWVACQQMPQIPRDNKAAALLMLTKNVDFVKDAHEEMERAVEECDPYSGLLNDTDENNSDNHNDEDDVLGFPSNQDLYWSEDDQELIIPCLALVRASKACLKKIRILVAENGKKDQVAQLDDIVDISDEISPSVDDLALSIYPPMCHLTVRINSAKLVSVLKKALMSAFKMELECLLD.

Ala2 carries the post-translational modification N-acetylalanine. Interaction with TCF3 stretches follow at residues 2 to 184 (ASAT…VDFV) and 150 to 332 (ISYN…CLLD). Interaction with RPLP0 stretches follow at residues 2–190 (ASAT…AHEE) and 240–332 (LIIP…CLLD). The interval 2–208 (ASATAPAAAA…DPYSGLLNDT (207 aa)) is required for interaction with CCND1.

This sequence belongs to the CCNDBP1 family. As to quaternary structure, interacts with CCND1 and GRAP2. May also interact with COPS5, RPLP0, SIRT6, SYF2 and TCF3. Phosphorylated.

The protein resides in the cytoplasm. Its subcellular location is the nucleus. Its function is as follows. May negatively regulate cell cycle progression. May act at least in part via inhibition of the cyclin-D1/CDK4 complex, thereby preventing phosphorylation of RB1 and blocking E2F-dependent transcription. The polypeptide is Cyclin-D1-binding protein 1 (CCNDBP1) (Macaca fascicularis (Crab-eating macaque)).